The primary structure comprises 295 residues: MQTFAEIALLREQIRAWRREGRRIAFVPTMGNLHDGHLTLVRKAREHADIVVVSIFVNPMQFEKADDLTNYPRTLENDLAKLNSEGVDLVFTPTPEVMYPQGLERQTFVEVPGLSQMLEGALRPGHFRGVATVVTKLFNMVQPDVACFGEKDYQQLALLRQMTLDMAMDIEIIGVPTVREMDGLAMSSRNGYLTVDERQRAPVLARTMRWVSSQMRGGRTDYSEIIVDANDQLRAAGLQPDESYIRDAVTLQAVSEETQQAVILMSAQLGKARLIDNQVVELTQPAAPVAEAAES.

Residue 30–37 (MGNLHDGH) participates in ATP binding. The Proton donor role is filled by His37. Gln61 contributes to the (R)-pantoate binding site. A beta-alanine-binding site is contributed by Gln61. 149-152 (GEKD) provides a ligand contact to ATP. Gln155 lines the (R)-pantoate pocket. Residues Val178 and 186–189 (MSSR) contribute to the ATP site.

This sequence belongs to the pantothenate synthetase family. As to quaternary structure, homodimer.

The protein localises to the cytoplasm. The catalysed reaction is (R)-pantoate + beta-alanine + ATP = (R)-pantothenate + AMP + diphosphate + H(+). Its pathway is cofactor biosynthesis; (R)-pantothenate biosynthesis; (R)-pantothenate from (R)-pantoate and beta-alanine: step 1/1. Functionally, catalyzes the condensation of pantoate with beta-alanine in an ATP-dependent reaction via a pantoyl-adenylate intermediate. The sequence is that of Pantothenate synthetase from Photobacterium profundum (strain SS9).